A 210-amino-acid polypeptide reads, in one-letter code: Ras-related protein RABC2a (210 aa).

Residue 20 to 27 coordinates GTP; it reads GDSGVGKS. Residues 41 to 49 carry the Effector region motif; that stretch reads LAPTIGVDF. GTP contacts are provided by residues 67 to 71, 127 to 130, and 157 to 158; these read DTAGQ, NKVD, and SA. 2 S-geranylgeranyl cysteine lipidation sites follow: Cys208 and Cys209.

The protein belongs to the small GTPase superfamily. Rab family. Interacts with XI-2/MYA2.

Its subcellular location is the cell membrane. It localises to the cytoplasm. Its function is as follows. Intracellular vesicle trafficking and protein transport. The chain is Ras-related protein RABC2a (RABC2A) from Arabidopsis thaliana (Mouse-ear cress).